Here is a 726-residue protein sequence, read N- to C-terminus: DNA-directed RNA polymerase subunit beta N-terminal section (726 aa).

This sequence belongs to the RNA polymerase beta chain family. In terms of assembly, in plastids the minimal PEP RNA polymerase catalytic core is composed of four subunits: alpha, beta, beta', and beta''. When a (nuclear-encoded) sigma factor is associated with the core the holoenzyme is formed, which can initiate transcription.

Its subcellular location is the plastid. It localises to the chloroplast. The catalysed reaction is RNA(n) + a ribonucleoside 5'-triphosphate = RNA(n+1) + diphosphate. In terms of biological role, DNA-dependent RNA polymerase catalyzes the transcription of DNA into RNA using the four ribonucleoside triphosphates as substrates. This is DNA-directed RNA polymerase subunit beta N-terminal section (rpoB1) from Tetradesmus obliquus (Green alga).